The chain runs to 295 residues: Protease HtpX (295 aa).

Transmembrane regions (helical) follow at residues 4-24 and 41-61; these read ILLF…TLSL and SQLL…SLFI. Histidine 147 is a Zn(2+) binding site. Glutamate 148 is an active-site residue. A Zn(2+)-binding site is contributed by histidine 151. Helical transmembrane passes span 158 to 178 and 199 to 219; these read VTLA…ARII and IATI…VMWF. Residue glutamate 224 participates in Zn(2+) binding.

Belongs to the peptidase M48B family. The cofactor is Zn(2+).

It localises to the cell inner membrane. The chain is Protease HtpX from Pseudomonas fluorescens (strain Pf0-1).